Consider the following 537-residue polypeptide: Phosphoenolpyruvate carboxykinase (ATP) (537 aa).

Positions 64, 204, and 210 each coordinate substrate. Residues K210, H229, and 245-253 (GLSGTGKTT) contribute to the ATP site. Mn(2+)-binding residues include K210 and H229. D266 is a Mn(2+) binding site. Residues E294, R330, 446 to 447 (RI), and T452 contribute to the ATP site. R330 contacts substrate.

It belongs to the phosphoenolpyruvate carboxykinase (ATP) family. Monomer. Requires Mn(2+) as cofactor.

The protein resides in the cytoplasm. The catalysed reaction is oxaloacetate + ATP = phosphoenolpyruvate + ADP + CO2. Its pathway is carbohydrate biosynthesis; gluconeogenesis. Involved in the gluconeogenesis. Catalyzes the conversion of oxaloacetate (OAA) to phosphoenolpyruvate (PEP) through direct phosphoryl transfer between the nucleoside triphosphate and OAA. This Aliivibrio fischeri (strain ATCC 700601 / ES114) (Vibrio fischeri) protein is Phosphoenolpyruvate carboxykinase (ATP).